A 405-amino-acid chain; its full sequence is Phosphoglycerate kinase (405 aa).

Substrate is bound by residues 21 to 23, Arg-36, 59 to 62, Arg-119, and Arg-161; these read DFN and HLGR. Residues Lys-212, Gly-301, Glu-332, and 361-364 contribute to the ATP site; that span reads GGDS.

Belongs to the phosphoglycerate kinase family. In terms of assembly, monomer.

It is found in the cytoplasm. It carries out the reaction (2R)-3-phosphoglycerate + ATP = (2R)-3-phospho-glyceroyl phosphate + ADP. The protein operates within carbohydrate degradation; glycolysis; pyruvate from D-glyceraldehyde 3-phosphate: step 2/5. The chain is Phosphoglycerate kinase from Leuconostoc citreum (strain KM20).